A 444-amino-acid chain; its full sequence is 23S rRNA (uracil(1939)-C(5))-methyltransferase RlmD (444 aa).

Residues 5–67 (RSRIDRTPFQ…RHFDEARTVE (63 aa)) form the TRAM domain. [4Fe-4S] cluster contacts are provided by cysteine 80, cysteine 86, cysteine 89, and cysteine 168. Positions 276, 305, 310, 326, 353, and 374 each coordinate S-adenosyl-L-methionine. The active-site Nucleophile is cysteine 400.

The protein belongs to the class I-like SAM-binding methyltransferase superfamily. RNA M5U methyltransferase family. RlmD subfamily.

The enzyme catalyses uridine(1939) in 23S rRNA + S-adenosyl-L-methionine = 5-methyluridine(1939) in 23S rRNA + S-adenosyl-L-homocysteine + H(+). Its function is as follows. Catalyzes the formation of 5-methyl-uridine at position 1939 (m5U1939) in 23S rRNA. In Stenotrophomonas maltophilia (strain K279a), this protein is 23S rRNA (uracil(1939)-C(5))-methyltransferase RlmD.